The chain runs to 619 residues: Sorting nexin-41 (619 aa).

The segment at 1-95 is disordered; the sequence is MWNDEDNNPY…ELVPRRKPGG (95 aa). The PX domain occupies 108–224; it reads PELPILITEA…WRFLDPNSSW (117 aa). A 1,2-diacyl-sn-glycero-3-phospho-(1D-myo-inositol-3-phosphate) contacts are provided by Arg142, Ser144, Lys168, and Arg191. The disordered stretch occupies residues 444–510; the sequence is YLSSSQQIQP…GSPSHKKAAS (67 aa). The segment covering 454–467 has biased composition (basic and acidic residues); sequence PRREPPAQHRRDGS.

The protein belongs to the sorting nexin family.

It is found in the endosome membrane. The protein localises to the endomembrane system. May be required for cytoplasm to vacuole transport (Cvt) and pexophagy. This chain is Sorting nexin-41 (vsp-6), found in Neurospora crassa (strain ATCC 24698 / 74-OR23-1A / CBS 708.71 / DSM 1257 / FGSC 987).